The following is a 349-amino-acid chain: Transcription factor HBP-1a (349 aa).

A compositionally biased stretch (polar residues) spans 1–11 (MGSNDPSTPSK). Disordered stretches follow at residues 1–39 (MGSN…WPGF), 101–196 (FHYP…NKPM), 224–277 (GATG…QAEC), and 312–349 (NTSL…QKEP). The segment covering 113–124 (PAGAQGAAPGAA) has biased composition (low complexity). Residues 174-191 (NENGSAQNGVSHSSSHGT) are compositionally biased toward polar residues. The bZIP domain maps to 252-315 (ELKKQKRKLS…EELLSKNTSL (64 aa)). Residues 254–273 (KKQKRKLSNRESARRSRLRK) form a basic motif region. Residues 261-277 (SNRESARRSRLRKQAEC) are compositionally biased toward basic and acidic residues. The leucine-zipper stretch occupies residues 280-315 (LGQRAEALKSENSSLRIELDRIKKEYEELLSKNTSL). Over residues 334–349 (MNERGDTNGGSHQKEP) the composition is skewed to basic and acidic residues.

Belongs to the bZIP family. In terms of assembly, binds DNA as a dimer.

Its subcellular location is the nucleus. Its function is as follows. Binds to the hexamer motif 5'-ACGTCA-3' of histone gene promoters. The protein is Transcription factor HBP-1a of Triticum aestivum (Wheat).